The sequence spans 108 residues: UPF0145 protein sll118 (108 aa).

It belongs to the UPF0145 family.

This is UPF0145 protein sll118 from Synechocystis sp. (strain ATCC 27184 / PCC 6803 / Kazusa).